The chain runs to 186 residues: Glutathione peroxidase 7 (186 aa).

An N-terminal signal peptide occupies residues 1 to 18 (MVAARAAAWLLLAAAACA). C56 is a catalytic residue.

This sequence belongs to the glutathione peroxidase family.

The protein resides in the secreted. It carries out the reaction 2 glutathione + H2O2 = glutathione disulfide + 2 H2O. The sequence is that of Glutathione peroxidase 7 (GPX7) from Bos taurus (Bovine).